A 396-amino-acid chain; its full sequence is Ornithine aminotransferase (396 aa).

Residue Lys-255 is modified to N6-(pyridoxal phosphate)lysine.

Belongs to the class-III pyridoxal-phosphate-dependent aminotransferase family. OAT subfamily. The cofactor is pyridoxal 5'-phosphate.

It localises to the cytoplasm. It catalyses the reaction a 2-oxocarboxylate + L-ornithine = L-glutamate 5-semialdehyde + an L-alpha-amino acid. Its pathway is amino-acid biosynthesis; L-proline biosynthesis; L-glutamate 5-semialdehyde from L-ornithine: step 1/1. Catalyzes the interconversion of ornithine to glutamate semialdehyde. The chain is Ornithine aminotransferase from Staphylococcus epidermidis (strain ATCC 35984 / DSM 28319 / BCRC 17069 / CCUG 31568 / BM 3577 / RP62A).